A 99-amino-acid chain; its full sequence is Cyclin-dependent kinases regulatory subunit (99 aa).

This sequence belongs to the CKS family. As to quaternary structure, forms a homohexamer that can probably bind six kinase subunits.

Binds to the catalytic subunit of the cyclin dependent kinases (Cdc2) and is essential for their biological function. The sequence is that of Cyclin-dependent kinases regulatory subunit from Leishmania mexicana.